Here is a 369-residue protein sequence, read N- to C-terminus: Small ribosomal subunit biogenesis GTPase RsgA (369 aa).

Residues 116–271 (GEQLIAANLD…LIDNPGIREI (156 aa)) form the CP-type G domain. GTP is bound by residues 161–164 (NKID) and 213–221 (GSSGVGKST). 4 residues coordinate Zn(2+): Cys-294, Cys-299, His-301, and Cys-307.

The protein belongs to the TRAFAC class YlqF/YawG GTPase family. RsgA subfamily. In terms of assembly, monomer. Associates with 30S ribosomal subunit, binds 16S rRNA. Zn(2+) serves as cofactor.

It localises to the cytoplasm. Functionally, one of several proteins that assist in the late maturation steps of the functional core of the 30S ribosomal subunit. Helps release RbfA from mature subunits. May play a role in the assembly of ribosomal proteins into the subunit. Circularly permuted GTPase that catalyzes slow GTP hydrolysis, GTPase activity is stimulated by the 30S ribosomal subunit. The chain is Small ribosomal subunit biogenesis GTPase RsgA from Methanosarcina acetivorans (strain ATCC 35395 / DSM 2834 / JCM 12185 / C2A).